The sequence spans 297 residues: Ribosomal RNA small subunit methyltransferase A (297 aa).

Positions 31, 33, 58, 79, 104, and 129 each coordinate S-adenosyl-L-methionine.

Belongs to the class I-like SAM-binding methyltransferase superfamily. rRNA adenine N(6)-methyltransferase family. RsmA subfamily.

The protein localises to the cytoplasm. The catalysed reaction is adenosine(1518)/adenosine(1519) in 16S rRNA + 4 S-adenosyl-L-methionine = N(6)-dimethyladenosine(1518)/N(6)-dimethyladenosine(1519) in 16S rRNA + 4 S-adenosyl-L-homocysteine + 4 H(+). Functionally, specifically dimethylates two adjacent adenosines (A1518 and A1519) in the loop of a conserved hairpin near the 3'-end of 16S rRNA in the 30S particle. May play a critical role in biogenesis of 30S subunits. The polypeptide is Ribosomal RNA small subunit methyltransferase A (Staphylococcus aureus (strain bovine RF122 / ET3-1)).